A 1219-amino-acid polypeptide reads, in one-letter code: Protein jagged-1 (1219 aa).

The N-terminal stretch at 1–33 (MRSPRTRGRPGRPLSLLLALLCALRAKVCGASG) is a signal peptide. Residues 34 to 1067 (QFELEILSMQ…QRRPLKNRTD (1034 aa)) lie on the Extracellular side of the membrane. N143 carries N-linked (GlcNAc...) asparagine glycosylation. The 45-residue stretch at 185–229 (VTCDDHYYGFGCNKFCRPRDDFFGHYACDQNGNKTCMEGWMGPEC) folds into the DSL domain. Cystine bridges form between C187–C196 and C200–C212. Residues 199 to 207 (FCRPRDDFF) form an important for interaction with NOTCH1 region. N217 carries N-linked (GlcNAc...) asparagine glycosylation. Disulfide bonds link C220–C229, C234–C245, C238–C251, C253–C262, C265–C276, C271–C282, C284–C293, C300–C312, C306–C322, C324–C333, C340–C351, C345–C360, C362–C371, C378–C389, C383–C398, C400–C409, C416–C427, C421–C436, C438–C447, C454–C464, C458–C473, C475–C484, C491–C502, C496–C511, C513–C522, C529–C540, C534–C549, C551–C560, C578–C605, C599–C615, C617–C626, C633–C644, C638–C653, C655–C664, C671–C682, C676–C691, C693–C702, C709–C720, C714–C729, and C731–C740. Positions 230 to 263 (NKAICRQGCSPKHGSCKLPGDCRCQYGWQGLYCD) constitute an EGF-like 1 domain. One can recognise an EGF-like 2; atypical domain in the interval 264-294 (KCIPHPGCVHGTCNEPWQCLCETNWGGQLCD). EGF-like domains are found at residues 296–334 (DLNYCGTHQPCLNRGTCSNTGPDKYQCSCPEGYSGPNCE) and 336–372 (AEHACLSDPCHNRGSCKETSSGFECECSPGWTGPTCS). Positions 374 to 410 (NIDDCSPNNCSHGGTCQDLVNGFKCVCPPQWTGKTCQ) constitute an EGF-like 5; calcium-binding domain. An N-linked (GlcNAc...) asparagine glycan is attached at N382. The 37-residue stretch at 412-448 (DANECEAKPCVNARSCKNLIASYYCDCLPGWMGQNCD) folds into the EGF-like 6; calcium-binding domain. Residues 450 to 485 (NINDCLGQCQNDASCRDLVNGYRCICPPGYAGDHCE) form the EGF-like 7; calcium-binding domain. The 37-residue stretch at 487–523 (DIDECASNPCLNGGHCQNEINRFQCLCPTGFSGNLCQ) folds into the EGF-like 8; calcium-binding domain. EGF-like domains follow at residues 525–561 (DIDYCEPNPCQNGAQCYNRASDYFCKCPEDYEGKNCS) and 586–627 (DTPE…TYCH). N559 is a glycosylation site (N-linked (GlcNAc...) asparagine). The region spanning 629 to 665 (NINDCEGNPCTNGGTCIDGVNSYKCICSDGWEGAHCE) is the EGF-like 11; calcium-binding domain. The EGF-like 12; calcium-binding domain occupies 667-703 (NINDCSQNPCHYGGTCRDLVNDFYCDCKNGWKGKTCH). EGF-like domains lie at 705 to 741 (RDSQCDEATCNNGGTCYDEVDTFKCMCPGGWEGTTCN) and 744 to 780 (RNSSCLPNPCHNGGTCVVNGDSFTCVCKEGWEGPICT). N-linked (GlcNAc...) asparagine glycosylation occurs at N745. Intrachain disulfides connect C748–C759, C753–C768, C770–C779, C786–C797, C791–C806, C808–C817, C824–C835, C829–C844, C846–C855, C925–C936, and C948–C958. The region spanning 782 to 818 (NTNDCSPHPCYNSGTCVDGDNWYRCECAPGFAGPDCR) is the EGF-like 15; calcium-binding domain. Positions 820-856 (NINECQSSPCAFGATCVDEINGYQCICPPGHSGAKCH) constitute an EGF-like 16; calcium-binding domain. 4 N-linked (GlcNAc...) asparagine glycosylation sites follow: N960, N991, N1045, and N1064. Residues 1068 to 1093 (FLVPLLSSVLTVAWVCCLVTAFYWCV) traverse the membrane as a helical segment. The Cytoplasmic portion of the chain corresponds to 1094-1219 (RKRRRKPSSH…QSLNRMEYIV (126 aa)). Residues 1182 to 1219 (REEKVPQRTPTKHPNWTNKQDNRDLESAQSLNRMEYIV) form a disordered region. The span at 1189 to 1200 (RTPTKHPNWTNK) shows a compositional bias: polar residues.

As to quaternary structure, interacts with NOTCH1. Interacts with NOTCH2 and NOTCH3. In terms of tissue distribution, widely expressed in a variety of tissues.

The protein resides in the membrane. The protein localises to the cell membrane. Functionally, ligand for multiple Notch receptors and involved in the mediation of Notch signaling. May be involved in cell-fate decisions during hematopoiesis. Enhances fibroblast growth factor-induced angiogenesis (in vitro). Seems to be involved in early and late stages of mammalian cardiovascular development. Inhibits myoblast differentiation. May regulate fibroblast growth factor-induced angiogenesis. This is Protein jagged-1 (Jag1) from Rattus norvegicus (Rat).